Reading from the N-terminus, the 423-residue chain is COP9 signalosome complex subunit 3 (423 aa).

Residue Ala2 is modified to N-acetylalanine. Positions Asn197–Glu365 constitute a PCI domain. The tract at residues Gln402–Ser423 is disordered. Residues Ser407, Ser410, and Ser423 each carry the phosphoserine modification.

This sequence belongs to the CSN3 family. Component of the CSN complex, composed of COPS1/GPS1, COPS2, COPS3, COPS4, COPS5, COPS6, COPS7 (COPS7A or COPS7B), COPS8 and COPS9. In the complex, it probably interacts directly with COPS1, COPS4, COPS8 and COPS9. Interacts with CK2 and PKD. Interacts with the translation initiation factor EIF3S6 and IKBKG. Interacts with ERCC6. As to expression, widely expressed.

The protein localises to the cytoplasm. It is found in the nucleus. Component of the COP9 signalosome complex (CSN), a complex involved in various cellular and developmental processes. The CSN complex is an essential regulator of the ubiquitin (Ubl) conjugation pathway by mediating the deneddylation of the cullin subunits of SCF-type E3 ligase complexes, leading to decrease the Ubl ligase activity of SCF-type complexes such as SCF, CSA or DDB2. The complex is also involved in phosphorylation of p53/TP53, c-jun/JUN, IkappaBalpha/NFKBIA, ITPK1 and IRF8/ICSBP, possibly via its association with CK2 and PKD kinases. CSN-dependent phosphorylation of TP53 and JUN promotes and protects degradation by the Ubl system, respectively. Essential to maintain the survival of epiblast cells and thus the development of the postimplantation embryo. This chain is COP9 signalosome complex subunit 3 (Cops3), found in Mus musculus (Mouse).